The sequence spans 343 residues: Protein pelota homolog (343 aa).

This sequence belongs to the eukaryotic release factor 1 family. Pelota subfamily. In terms of assembly, monomer. It depends on a divalent metal cation as a cofactor.

The protein resides in the cytoplasm. In terms of biological role, may function in recognizing stalled ribosomes, interact with stem-loop structures in stalled mRNA molecules, and effect endonucleolytic cleavage of the mRNA. May play a role in the release non-functional ribosomes and degradation of damaged mRNAs. Has endoribonuclease activity. The chain is Protein pelota homolog from Cenarchaeum symbiosum (strain A).